The chain runs to 287 residues: Survival motor neuron protein (287 aa).

The interval methionine 1–aspartate 27 is disordered. The interval proline 8–aspartate 39 is P1 (binding site for GEMIN2). Position 20 is a phosphothreonine (threonine 20). Phosphoserine is present on residues serine 23 and serine 26. A Glycyl lysine isopeptide (Lys-Gly) (interchain with G-Cter in SUMO2) cross-link involves residue lysine 46. The interval glycine 52–alanine 83 is disordered. Residues serine 63 to lysine 77 are compositionally biased toward basic residues. At threonine 64 the chain carries Phosphothreonine. The Tudor domain maps to glutamine 86–asparagine 146. Residues lysine 92–lysine 205 are required for interaction with RPP20/POP7. Residues glutamate 148 to proline 216 are disordered. Positions glutamate 157–lysine 180 are enriched in polar residues. A Glycyl lysine isopeptide (Lys-Gly) (interchain with G-Cter in SUMO2) cross-link involves residue lysine 205. A P2 (binding site for SM B) region spans residues proline 234–tryptophan 261. The segment at glycine 273 to asparagine 287 is required for interaction with SYNCRIP.

It belongs to the SMN family. Homooligomer; may form higher order homooligomers in the dimer to octamer range. Part of the core SMN complex that contains SMN1, GEMIN2/SIP1, DDX20/GEMIN3, GEMIN4, GEMIN5, GEMIN6, GEMIN7, GEMIN8 and STRAP/UNRIP. Part of the SMN-Sm complex that contains SMN1, GEMIN2/SIP1, DDX20/GEMIN3, GEMIN4, GEMIN5, GEMIN6, GEMIN7, GEMIN8, STRAP/UNRIP and the Sm proteins SNRPB, SNRPD1, SNRPD2, SNRPD3, SNRPE, SNRPF and SNRPG. Component of an import snRNP complex composed of KPNB1, RNUT1, SMN1 and ZNF259. Interacts with DDX20, FBL, NOLA1, RNUT1, SYNCRIP and with several spliceosomal snRNP core Sm proteins, including SNRPB, SNRPD1, SNRPD2, SNRPD3, SNRPE and ILF3. Interacts with GEMIN2; the interaction is direct. Interacts with GEMIN3; the interaction is direct. Interacts with GEMIN8; the interaction is direct. Interacts with SNRPB; the interaction is direct. Interacts (via Tudor domain) with SNRPD1 (via C-terminus); the interaction is direct. Interacts with SNRPD2; the interaction is direct. Interacts (via Tudor domain) with SNRPD3 (via C-terminus); the interaction is direct. Interacts with SNRPE; the interaction is direct. Interacts with OSTF1, LSM10, LSM11 and RPP20/POP7. Interacts (via C-terminal region) with ZPR1 (via C-terminal region). Interacts (via Tudor domain) with COIL. Interacts with SETX; recruits SETX to POLR2A. Interacts with POLR2A (via the C-terminal domain (CTD)). Interacts with PRMT5. Interacts with XRN2. Interacts (via C-terminus) with FMR1 (via C-terminus); the interaction is direct and occurs in a RNA-independent manner. Interacts (via Tudor domain) with SF3B2 ('Arg-508'-methylated form). Interacts with WRAP53/TCAB1. Interacts (via Tudor domain) with ELAVL4 in an RNA-independent manner; the interaction is required for localization of ELAVL4 to RNA granules. Interacts with FRG1.

Its subcellular location is the nucleus. It localises to the gem. The protein resides in the cajal body. The protein localises to the cytoplasm. It is found in the cytoplasmic granule. Its subcellular location is the perikaryon. It localises to the cell projection. The protein resides in the neuron projection. The protein localises to the axon. It is found in the myofibril. Its subcellular location is the sarcomere. It localises to the z line. The SMN complex catalyzes the assembly of small nuclear ribonucleoproteins (snRNPs), the building blocks of the spliceosome, and thereby plays an important role in the splicing of cellular pre-mRNAs. Most spliceosomal snRNPs contain a common set of Sm proteins SNRPB, SNRPD1, SNRPD2, SNRPD3, SNRPE, SNRPF and SNRPG that assemble in a heptameric protein ring on the Sm site of the small nuclear RNA to form the core snRNP (Sm core). In the cytosol, the Sm proteins SNRPD1, SNRPD2, SNRPE, SNRPF and SNRPG are trapped in an inactive 6S pICln-Sm complex by the chaperone CLNS1A that controls the assembly of the core snRNP. To assemble core snRNPs, the SMN complex accepts the trapped 5Sm proteins from CLNS1A forming an intermediate. Binding of snRNA inside 5Sm ultimately triggers eviction of the SMN complex, thereby allowing binding of SNRPD3 and SNRPB to complete assembly of the core snRNP. Within the SMN complex, SMN1 acts as a structural backbone and together with GEMIN2 it gathers the Sm complex subunits. Ensures the correct splicing of U12 intron-containing genes that may be important for normal motor and proprioceptive neurons development. Also required for resolving RNA-DNA hybrids created by RNA polymerase II, that form R-loop in transcription terminal regions, an important step in proper transcription termination. May also play a role in the metabolism of small nucleolar ribonucleoprotein (snoRNPs). The chain is Survival motor neuron protein (SMN1) from Canis lupus familiaris (Dog).